A 61-amino-acid chain; its full sequence is Bacteriocin mesentericin Y105 (61 aa).

Positions 1–24 are cleaved as a signal peptide; sequence MTNMKSVEAYQQLDNQNLKKVVGG. Residues C33 and C38 are joined by a disulfide bond.

Belongs to the bacteriocin class IIA/YGNGV family.

The protein localises to the secreted. Bacteriocin active against Listeria monocytogenes. This is Bacteriocin mesentericin Y105 (mesY) from Leuconostoc mesenteroides.